The following is a 187-amino-acid chain: Lysozyme 3 (187 aa).

The N-terminal stretch at 1–18 is a signal peptide; sequence MNGLFLFCVATTAALAYG. An I-type lysozyme domain is found at 68 to 183; it reads TGIVSQQCLQ…WSHVHAQGCS (116 aa). Intrachain disulfides connect C75-C151, C80-C86, C91-C100, C113-C133, C123-C129, and C147-C165. E83 (proton donor) is an active-site residue. The active-site Nucleophile is D94. Residue 106-112 coordinates substrate; the sequence is KEGYWHD. Substrate-binding positions include Y137 and 158–160; that span reads HNG.

Highest levels of expression detected in the digestive glands. Lower levels in the mantle, labial palps, gills and style-midgut sac, and lowest levels detected in the hemocytes. Not detected in the gonads.

It localises to the secreted. The catalysed reaction is Hydrolysis of (1-&gt;4)-beta-linkages between N-acetylmuramic acid and N-acetyl-D-glucosamine residues in a peptidoglycan and between N-acetyl-D-glucosamine residues in chitodextrins.. In terms of biological role, has antibacterial activity against the Gram-negative bacterium E.coli. No antibacterial activity detected against the Gram-negative bacterium V.vulnificus. This chain is Lysozyme 3, found in Crassostrea virginica (Eastern oyster).